The primary structure comprises 317 residues: N-acetyl-gamma-glutamyl-phosphate reductase (317 aa).

Residue Cys136 is part of the active site.

This sequence belongs to the NAGSA dehydrogenase family. Type 1 subfamily.

It is found in the cytoplasm. The catalysed reaction is N-acetyl-L-glutamate 5-semialdehyde + phosphate + NADP(+) = N-acetyl-L-glutamyl 5-phosphate + NADPH + H(+). The protein operates within amino-acid biosynthesis; L-arginine biosynthesis; N(2)-acetyl-L-ornithine from L-glutamate: step 3/4. In terms of biological role, catalyzes the NADPH-dependent reduction of N-acetyl-5-glutamyl phosphate to yield N-acetyl-L-glutamate 5-semialdehyde. The polypeptide is N-acetyl-gamma-glutamyl-phosphate reductase (Stenotrophomonas maltophilia (strain R551-3)).